Reading from the N-terminus, the 303-residue chain is tRNA-cytidine(32) 2-sulfurtransferase (303 aa).

A PP-loop motif motif is present at residues 49–54 (SGGKDS). [4Fe-4S] cluster is bound by residues C124, C127, and C215.

This sequence belongs to the TtcA family. In terms of assembly, homodimer. Mg(2+) is required as a cofactor. [4Fe-4S] cluster serves as cofactor.

The protein localises to the cytoplasm. It catalyses the reaction cytidine(32) in tRNA + S-sulfanyl-L-cysteinyl-[cysteine desulfurase] + AH2 + ATP = 2-thiocytidine(32) in tRNA + L-cysteinyl-[cysteine desulfurase] + A + AMP + diphosphate + H(+). It participates in tRNA modification. Functionally, catalyzes the ATP-dependent 2-thiolation of cytidine in position 32 of tRNA, to form 2-thiocytidine (s(2)C32). The sulfur atoms are provided by the cysteine/cysteine desulfurase (IscS) system. This chain is tRNA-cytidine(32) 2-sulfurtransferase, found in Anaeromyxobacter sp. (strain Fw109-5).